We begin with the raw amino-acid sequence, 301 residues long: Protease HtpX (301 aa).

Helical transmembrane passes span 4–24 and 38–58; these read IGLF…ILSL and LGNL…ISLL. Residue His-147 participates in Zn(2+) binding. The active site involves Glu-148. His-151 lines the Zn(2+) pocket. Transmembrane regions (helical) follow at residues 155 to 175 and 200 to 220; these read GDMV…MFFA and FAIT…IVMW. Glu-226 provides a ligand contact to Zn(2+).

It belongs to the peptidase M48B family. Requires Zn(2+) as cofactor.

Its subcellular location is the cell inner membrane. The chain is Protease HtpX from Acinetobacter baylyi (strain ATCC 33305 / BD413 / ADP1).